Here is a 247-residue protein sequence, read N- to C-terminus: Probable transcriptional regulatory protein Dvul_0986 (247 aa).

A disordered region spans residues 1–22 (MAGHSKWANIQHRKGRQDAKRG).

Belongs to the TACO1 family.

The protein resides in the cytoplasm. The polypeptide is Probable transcriptional regulatory protein Dvul_0986 (Nitratidesulfovibrio vulgaris (strain DP4) (Desulfovibrio vulgaris)).